The sequence spans 296 residues: Protein RarD (296 aa).

The Cytoplasmic portion of the chain corresponds to 1–11 (MDAKQTRQGVL). Residues 12 to 34 (LALAAYFIWGIAPAYFKLIYYVP) form a helical membrane-spanning segment. The region spanning 18–145 (FIWGIAPAYF…AICGVLVQLW (128 aa)) is the EamA domain. Residues 35–37 (ADE) are Periplasmic-facing. The chain crosses the membrane as a helical span at residues 38 to 60 (ILTHRVIWSFFFMVVLMSICRQW). At 61 to 72 (SYLKTLIQTPQK) the chain is on the cytoplasmic side. A helical membrane pass occupies residues 73–95 (IFMLAVSAVLIGGNWLLFIWAVN). Residues 96-99 (NHHM) are Periplasmic-facing. A helical membrane pass occupies residues 100–122 (LEASLGYFINPLVNIVLGMIFLG). The Cytoplasmic segment spans residues 123-128 (ERFRRM). Residues 129–146 (QWLAVILAICGVLVQLWT) form a helical membrane-spanning segment. The Periplasmic portion of the chain corresponds to 147–149 (FGS). A helical membrane pass occupies residues 150-167 (LPIIALGLAFSFAFYGLV). Over 168-179 (RKKIAVEAQTGM) the chain is Cytoplasmic. Residues 180-197 (LIETMWLLPVAAIYLFAI) form a helical membrane-spanning segment. The Periplasmic portion of the chain corresponds to 198 to 211 (ADSSTSHMGQNPMS). Residues 212–234 (LNLLLIAAGIVTTVPLLCFTAAA) form a helical membrane-spanning segment. Residues 235–238 (TRLR) are Cytoplasmic-facing. The helical transmembrane segment at 239–261 (LSTLGFFQYIGPTLMFLLAVTFY) threads the bilayer. The Periplasmic portion of the chain corresponds to 262 to 270 (GEKPGADKM). The helical transmembrane segment at 271–290 (VTFAFIWVALAIFVMDAIYT) threads the bilayer. Residues 291–296 (QRRTSK) are Cytoplasmic-facing.

It belongs to the EamA transporter family.

It is found in the cell inner membrane. The polypeptide is Protein RarD (rarD) (Escherichia coli (strain K12)).